Reading from the N-terminus, the 364-residue chain is tRNA 2-selenouridine synthase (364 aa).

Residues 14-137 (LLADTPLIDV…LRQTAIQATW (124 aa)) enclose the Rhodanese domain. The active-site S-selanylcysteine intermediate is the Cys-97. Gly-149 is a (2E)-geranyl diphosphate binding site.

Belongs to the SelU family. As to quaternary structure, monomer.

The catalysed reaction is 5-methylaminomethyl-2-thiouridine(34) in tRNA + selenophosphate + (2E)-geranyl diphosphate + H2O + H(+) = 5-methylaminomethyl-2-selenouridine(34) in tRNA + (2E)-thiogeraniol + phosphate + diphosphate. The enzyme catalyses 5-methylaminomethyl-2-thiouridine(34) in tRNA + (2E)-geranyl diphosphate = 5-methylaminomethyl-S-(2E)-geranyl-thiouridine(34) in tRNA + diphosphate. It carries out the reaction 5-methylaminomethyl-S-(2E)-geranyl-thiouridine(34) in tRNA + selenophosphate + H(+) = 5-methylaminomethyl-2-(Se-phospho)selenouridine(34) in tRNA + (2E)-thiogeraniol. It catalyses the reaction 5-methylaminomethyl-2-(Se-phospho)selenouridine(34) in tRNA + H2O = 5-methylaminomethyl-2-selenouridine(34) in tRNA + phosphate. Its function is as follows. Involved in the post-transcriptional modification of the uridine at the wobble position (U34) of tRNA(Lys), tRNA(Glu) and tRNA(Gln). Catalyzes the conversion of 2-thiouridine (S2U-RNA) to 2-selenouridine (Se2U-RNA). Acts in a two-step process involving geranylation of 2-thiouridine (S2U) to S-geranyl-2-thiouridine (geS2U) and subsequent selenation of the latter derivative to 2-selenouridine (Se2U) in the tRNA chain. The protein is tRNA 2-selenouridine synthase of Salmonella typhimurium (strain LT2 / SGSC1412 / ATCC 700720).